The chain runs to 84 residues: Small ribosomal subunit protein uS17c (84 aa).

Belongs to the universal ribosomal protein uS17 family. As to quaternary structure, part of the 30S ribosomal subunit.

Its subcellular location is the plastid. It localises to the chloroplast. Functionally, one of the primary rRNA binding proteins, it binds specifically to the 5'-end of 16S ribosomal RNA. This Phaeodactylum tricornutum (strain CCAP 1055/1) protein is Small ribosomal subunit protein uS17c (rps17).